Consider the following 544-residue polypeptide: Zinc finger and SCAN domain-containing protein 25 (544 aa).

Residues Lys-3 and Lys-22 each participate in a glycyl lysine isopeptide (Lys-Gly) (interchain with G-Cter in SUMO2) cross-link. The SCAN box domain occupies 42-124; sequence RLRFRQFRYQ…AMVEDLTERA (83 aa). Lys-128 is covalently cross-linked (Glycyl lysine isopeptide (Lys-Gly) (interchain with G-Cter in SUMO2)). The tract at residues 157 to 189 is disordered; sequence VEVKPEWGMPPGEGVQGPDPGTEEQLSQDPGDE. Residues Lys-278 and Lys-285 each participate in a glycyl lysine isopeptide (Lys-Gly) (interchain with G-Cter in SUMO2) cross-link. C2H2-type zinc fingers lie at residues 348–370, 375–397, 403–425, 431–453, 459–480, and 486–508; these read FQCP…QRTH, YGCV…QRTH, YVCS…QRSH, YKCG…RRTH, YTCE…RRAH, and YGCQ…QRIH. The C2H2-type 7; degenerate zinc finger occupies 514 to 536; sequence YHCPACGRSFNQRSILNRHQKTQ.

Belongs to the krueppel C2H2-type zinc-finger protein family.

Its subcellular location is the nucleus. In terms of biological role, may be involved in transcriptional regulation. In Homo sapiens (Human), this protein is Zinc finger and SCAN domain-containing protein 25 (ZSCAN25).